A 258-amino-acid polypeptide reads, in one-letter code: Hydroxyacylglutathione hydrolase (258 aa).

His52, His54, Asp56, His57, His109, Asp126, and His164 together coordinate Zn(2+).

This sequence belongs to the metallo-beta-lactamase superfamily. Glyoxalase II family. In terms of assembly, monomer. It depends on Zn(2+) as a cofactor.

The catalysed reaction is an S-(2-hydroxyacyl)glutathione + H2O = a 2-hydroxy carboxylate + glutathione + H(+). It participates in secondary metabolite metabolism; methylglyoxal degradation; (R)-lactate from methylglyoxal: step 2/2. Thiolesterase that catalyzes the hydrolysis of S-D-lactoyl-glutathione to form glutathione and D-lactic acid. The polypeptide is Hydroxyacylglutathione hydrolase (Xylella fastidiosa (strain M12)).